Reading from the N-terminus, the 410-residue chain is Phosphopentomutase (410 aa).

6 residues coordinate Mn(2+): Asp-10, Asp-309, His-314, Asp-350, His-351, and His-362.

The protein belongs to the phosphopentomutase family. It depends on Mn(2+) as a cofactor.

It localises to the cytoplasm. It catalyses the reaction 2-deoxy-alpha-D-ribose 1-phosphate = 2-deoxy-D-ribose 5-phosphate. The catalysed reaction is alpha-D-ribose 1-phosphate = D-ribose 5-phosphate. The protein operates within carbohydrate degradation; 2-deoxy-D-ribose 1-phosphate degradation; D-glyceraldehyde 3-phosphate and acetaldehyde from 2-deoxy-alpha-D-ribose 1-phosphate: step 1/2. Its function is as follows. Isomerase that catalyzes the conversion of deoxy-ribose 1-phosphate (dRib-1-P) and ribose 1-phosphate (Rib-1-P) to deoxy-ribose 5-phosphate (dRib-5-P) and ribose 5-phosphate (Rib-5-P), respectively. The polypeptide is Phosphopentomutase (Aliivibrio fischeri (strain ATCC 700601 / ES114) (Vibrio fischeri)).